Consider the following 276-residue polypeptide: MHWLEVVLLGVIQGLTEFLPVSSSGHLVLFQGLMGMEEPELLLDICLHVGTLAAVLWVFFAQILEAAKGFFRFCAAAPKGKAAMVQVWTTDQDARMALLIIIGTIPTGFIGMGFHKIADKLFASPVLAGAMLLITGALLWATRYVRTEGKLLPKVTWGNALTVGTIQGLAILPGISRSGSTICAALFLGVDREVAARYSFLLSIPAIVAALILEVADASAAAHPPVSMLLLGGIVSAFTGLAALKWLLAIVRKGSLWWFAPYCWLVGATVLVANFV.

8 consecutive transmembrane segments (helical) span residues 1 to 21 (MHWL…FLPV), 41 to 61 (LLLD…VFFA), 97 to 117 (ALLI…FHKI), 121 to 141 (LFAS…LLWA), 155 to 175 (VTWG…LPGI), 200 to 220 (FLLS…DASA), 231 to 251 (LGGI…LAIV), and 256 to 276 (LWWF…ANFV).

It belongs to the UppP family.

It localises to the cell inner membrane. It carries out the reaction di-trans,octa-cis-undecaprenyl diphosphate + H2O = di-trans,octa-cis-undecaprenyl phosphate + phosphate + H(+). In terms of biological role, catalyzes the dephosphorylation of undecaprenyl diphosphate (UPP). Confers resistance to bacitracin. In Desulfatibacillum aliphaticivorans, this protein is Undecaprenyl-diphosphatase.